Here is a 131-residue protein sequence, read N- to C-terminus: Fumarate reductase subunit C (131 aa).

Transmembrane regions (helical) follow at residues 30–50 (EGTA…LFAL), 61–81 (IGFL…AAAL), and 110–130 (IKGL…VALF).

Belongs to the FrdC family. As to quaternary structure, part of an enzyme complex containing four subunits: a flavoprotein (FrdA), an iron-sulfur protein (FrdB), and two hydrophobic anchor proteins (FrdC and FrdD).

The protein resides in the cell inner membrane. Its function is as follows. Two distinct, membrane-bound, FAD-containing enzymes are responsible for the catalysis of fumarate and succinate interconversion; fumarate reductase is used in anaerobic growth, and succinate dehydrogenase is used in aerobic growth. Anchors the catalytic components of the fumarate reductase complex to the cell inner membrane, binds quinones. In Klebsiella pneumoniae (strain 342), this protein is Fumarate reductase subunit C.